A 254-amino-acid chain; its full sequence is 3-oxo-5-alpha-steroid 4-dehydrogenase 2 (254 aa).

Helical transmembrane passes span 8-28 (SPVL…LYVA), 72-92 (PLSL…LHYF), 146-166 (FSLG…SDYI), and 206-226 (LATW…FLGL).

The protein belongs to the steroid 5-alpha reductase family. As to expression, expressed in high levels in the prostate and many other androgen-sensitive tissues.

The protein localises to the microsome membrane. It localises to the endoplasmic reticulum membrane. The catalysed reaction is a 3-oxo-5alpha-steroid + NADP(+) = a 3-oxo-Delta(4)-steroid + NADPH + H(+). It carries out the reaction 17beta-hydroxy-5alpha-androstan-3-one + NADP(+) = testosterone + NADPH + H(+). The enzyme catalyses 5alpha-pregnane-3,20-dione + NADP(+) = progesterone + NADPH + H(+). Its function is as follows. Converts testosterone (T) into 5-alpha-dihydrotestosterone (DHT) and progesterone or corticosterone into their corresponding 5-alpha-3-oxosteroids. It plays a central role in sexual differentiation and androgen physiology. The chain is 3-oxo-5-alpha-steroid 4-dehydrogenase 2 (SRD5A2) from Homo sapiens (Human).